We begin with the raw amino-acid sequence, 368 residues long: Cytochrome b (368 aa).

4 helical membrane passes run 25–45, 69–90, 105–125, and 170–190; these read FGSM…FLAM, WIMQ…YIHI, WLSG…GYVL, and FFAL…IHII. Heme b is bound by residues His-75 and His-89. Residues His-174 and His-188 each coordinate heme b. A ubiquinone is bound at residue His-193. A run of 4 helical transmembrane segments spans residues 218 to 238, 280 to 300, 312 to 332, and 339 to 358; these read YKDM…MSFT, LGGT…PFTH, LTQT…WTAT, and FIFI…IINP.

This sequence belongs to the cytochrome b family. The cytochrome bc1 complex contains 3 respiratory subunits (MT-CYB, CYC1 and UQCRFS1), 2 core proteins (UQCRC1 and UQCRC2) and probably 6 low-molecular weight proteins. The cofactor is heme b.

The protein resides in the mitochondrion inner membrane. Component of the ubiquinol-cytochrome c reductase complex (complex III or cytochrome b-c1 complex) that is part of the mitochondrial respiratory chain. The b-c1 complex mediates electron transfer from ubiquinol to cytochrome c. Contributes to the generation of a proton gradient across the mitochondrial membrane that is then used for ATP synthesis. This chain is Cytochrome b (MT-CYB), found in Notechis ater (Black tiger snake).